A 494-amino-acid chain; its full sequence is Alpha-amylase B (494 aa).

The signal sequence occupies residues 1-18 (MFLAKSIVCLALLAVANA). The residue at position 19 (Gln19) is a Pyrrolidone carboxylic acid. Cys46 and Cys102 are oxidised to a cystine. The Ca(2+) site is built by Asn116, Arg165, and Asp174. Residues Cys153 and Cys167 are joined by a disulfide bond. A chloride-binding site is contributed by Arg202. Asp204 serves as the catalytic Nucleophile. His208 contacts Ca(2+). Glu241 acts as the Proton donor in catalysis. Chloride is bound by residues Asn304 and Arg343. Intrachain disulfides connect Cys376–Cys382 and Cys448–Cys460.

Belongs to the glycosyl hydrolase 13 family. As to quaternary structure, monomer. Ca(2+) serves as cofactor. Requires chloride as cofactor.

It catalyses the reaction Endohydrolysis of (1-&gt;4)-alpha-D-glucosidic linkages in polysaccharides containing three or more (1-&gt;4)-alpha-linked D-glucose units.. The chain is Alpha-amylase B (Amy-d) from Drosophila yakuba (Fruit fly).